Consider the following 163-residue polypeptide: Jun dimerization protein 2 (163 aa).

Disordered regions lie at residues 1–20 (MMPG…PGLG) and 59–89 (KRPQ…AARC). Residue Lys65 forms a Glycyl lysine isopeptide (Lys-Gly) (interchain with G-Cter in SUMO2) linkage. Positions 72–135 (EERRKRRREK…QQLILMLNRH (64 aa)) constitute a bZIP domain. A basic motif region spans residues 74–96 (RRKRRREKNKVAAARCRNKKKER). Positions 100 to 128 (LQRESERLELMNAELKTQIEELKLERQQL) are leucine-zipper. A Phosphothreonine; by MAPK8 modification is found at Thr148.

It belongs to the bZIP family. ATF subfamily. In terms of assembly, forms a homodimer or heterodimer with JUN, JUNB, JUND, CEBPG and ATF2 thereby inhibiting transactivation by JUN, ATF2 and CEBPG. Binds multiple DNA elements such as cAMP-response element (CRE) and TPA response element (TRE) either as homodimer or heterodimer. Interacts with IRF2BP1. In terms of processing, phosphorylation of Thr-148 by MAPK8 in response to different stress conditions such as, UV irradiation, oxidatives stress and anisomycin treatments. Post-translationally, polyubiquitinated; probably by IRF2BP1. As to expression, ubiquitously expressed in all adult tissues tested as well in embryos.

Its subcellular location is the nucleus. Component of the AP-1 transcription factor that represses transactivation mediated by the Jun family of proteins. Involved in a variety of transcriptional responses associated with AP-1, such as UV-induced apoptosis, cell differentiation, tumorigenesis and antitumogeneris. Can also function as a repressor by recruiting histone deacetylase 3/HDAC3 to the promoter region of JUN. May control transcription via direct regulation of the modification of histones and the assembly of chromatin. In Mus musculus (Mouse), this protein is Jun dimerization protein 2 (Jdp2).